Reading from the N-terminus, the 1200-residue chain is Zinc finger protein 804A (1200 aa).

The segment at 57–81 adopts a C2H2-type zinc-finger fold; that stretch reads FYCELCDKQYYKHQEFDNHINSYDH. 6 disordered regions span residues 252-280, 343-367, 582-687, 727-777, 799-828, and 874-949; these read STSH…PEAM, DGPV…RTSA, HWFH…NCGG, EDDG…SDES, QPKK…NYPM, and PYNP…TNPE. The segment covering 585–603 has biased composition (basic residues); sequence HKSRRKKKRRKLCRYHPGK. Residues 604 to 666 show a composition bias toward basic and acidic residues; it reads SSKEPEGSGK…ASTHLGEKET (63 aa). Polar residues-rich tracts occupy residues 667 to 687 and 732 to 756; these read MNTT…NCGG and LASQ…SLTN. The segment covering 800–811 has biased composition (basic residues); it reads PKKKRRRKRSRL. Polar residues predominate over residues 891-944; it reads TETTPCDSSQTSNDLATPVNVTRDPSNSTTDNTLLEHNQRSQTTNSNEKQTPFK.

In Mus musculus (Mouse), this protein is Zinc finger protein 804A (Znf804a).